A 701-amino-acid polypeptide reads, in one-letter code: Mediator of RNA polymerase II transcription subunit 25 (701 aa).

Disordered stretches follow at residues 277-388 (AAQK…GAQQ) and 580-617 (AAAT…NPGA). Over residues 286–306 (ANQQQKNRFGQISTPPFSQSP) the composition is skewed to polar residues. 2 stretches are compositionally biased toward low complexity: residues 314–367 (PSLS…NNQQ) and 593–604 (APPNQVQGQAQA). An LXXLL motif motif is present at residues 621–625 (LRSLL). Positions 650-689 (APGGGAQMQPQWRQPHQGPLMVPTGPRGPVTQNPGMPSVS) are disordered. Residues 679–689 (VTQNPGMPSVS) show a composition bias toward polar residues.

The protein belongs to the Mediator complex subunit 25 family. In terms of assembly, component of the Mediator complex.

The protein localises to the nucleus. In terms of biological role, component of the Mediator complex, a coactivator involved in the regulated transcription of nearly all RNA polymerase II-dependent genes. Mediator functions as a bridge to convey information from gene-specific regulatory proteins to the basal RNA polymerase II transcription machinery. Mediator is recruited to promoters by direct interactions with regulatory proteins and serves as a scaffold for the assembly of a functional preinitiation complex with RNA polymerase II and the general transcription factors. This is Mediator of RNA polymerase II transcription subunit 25 (med25) from Danio rerio (Zebrafish).